A 299-amino-acid polypeptide reads, in one-letter code: Ribosomal RNA small subunit methyltransferase H (299 aa).

Residues 36 to 38 (GGH), Asp-55, Phe-82, Asp-97, and Gln-104 each bind S-adenosyl-L-methionine.

This sequence belongs to the methyltransferase superfamily. RsmH family.

It is found in the cytoplasm. It carries out the reaction cytidine(1402) in 16S rRNA + S-adenosyl-L-methionine = N(4)-methylcytidine(1402) in 16S rRNA + S-adenosyl-L-homocysteine + H(+). Functionally, specifically methylates the N4 position of cytidine in position 1402 (C1402) of 16S rRNA. The chain is Ribosomal RNA small subunit methyltransferase H from Synechococcus sp. (strain RCC307).